A 212-amino-acid chain; its full sequence is MRKVLLTGFEPFGGESINPSLELVKQMASRALPQVEIIGCEVPVVRYQAIETVLQAVETHQPDLVLMIGQASGRCAITPERVAINLDDYRIEDNAGHQPVDEPIIATGPAAYFSTLPVKAITHALQQAGIPCQISHSAGTFVCNHLFYGVQHHLHTRAIRSGFIHIPLLPEQASASNQPSMSLETLVHGLEMMMITCLETEQDTKHTGGTIC.

Residues Glu-80, Cys-143, and His-165 contribute to the active site.

Belongs to the peptidase C15 family. In terms of assembly, homotetramer.

The protein localises to the cytoplasm. It carries out the reaction Release of an N-terminal pyroglutamyl group from a polypeptide, the second amino acid generally not being Pro.. Removes 5-oxoproline from various penultimate amino acid residues except L-proline. This chain is Pyrrolidone-carboxylate peptidase, found in Vibrio vulnificus (strain YJ016).